The sequence spans 283 residues: Shikimate kinase (283 aa).

86 to 96 (PIKSGLSSSSA) contacts ATP.

Belongs to the GHMP kinase family. Archaeal shikimate kinase subfamily.

The protein localises to the cytoplasm. It carries out the reaction shikimate + ATP = 3-phosphoshikimate + ADP + H(+). The protein operates within metabolic intermediate biosynthesis; chorismate biosynthesis; chorismate from D-erythrose 4-phosphate and phosphoenolpyruvate: step 5/7. This Methanococcus maripaludis (strain C5 / ATCC BAA-1333) protein is Shikimate kinase.